The following is a 459-amino-acid chain: ATP synthase subunit beta (459 aa).

Residue Gly148–Thr155 coordinates ATP.

This sequence belongs to the ATPase alpha/beta chains family. F-type ATPases have 2 components, CF(1) - the catalytic core - and CF(0) - the membrane proton channel. CF(1) has five subunits: alpha(3), beta(3), gamma(1), delta(1), epsilon(1). CF(0) has three main subunits: a(1), b(2) and c(9-12). The alpha and beta chains form an alternating ring which encloses part of the gamma chain. CF(1) is attached to CF(0) by a central stalk formed by the gamma and epsilon chains, while a peripheral stalk is formed by the delta and b chains.

Its subcellular location is the cell inner membrane. It catalyses the reaction ATP + H2O + 4 H(+)(in) = ADP + phosphate + 5 H(+)(out). In terms of biological role, produces ATP from ADP in the presence of a proton gradient across the membrane. The catalytic sites are hosted primarily by the beta subunits. This chain is ATP synthase subunit beta, found in Ruthia magnifica subsp. Calyptogena magnifica.